Here is a 265-residue protein sequence, read N- to C-terminus: MSSDGEEGSFEGSQLVSQSPSINSQTYAIPIPEGMLDQLDISSSSSSAGGRDDEDEEDDDADVDVGVGSECLVGVTGQDRLIIGSGDDSDNGDGDEVHDNAHATSDVSSTAELNHVCSEETEDMDNVDEGLLDDIMNNTGGGGFVNGFEFHESEPMFDVSKYVFETLIQAINSADFSESLAFQTKTSAVINAKSLELKQLINMSKDRLVDLQDKFEKGVQTSNRIKRNLKMSREKIQFLNDEFRTNYPIEFNQARDKIIERTIDS.

Disordered stretches follow at residues 1–63 (MSSD…DADV) and 79–111 (DRLI…SSTA). The span at 14–27 (QLVSQSPSINSQTY) shows a compositional bias: polar residues. The span at 52–63 (DDEDEEDDDADV) shows a compositional bias: acidic residues. Residues 102–111 (HATSDVSSTA) show a composition bias toward polar residues. Residues 196 to 245 (ELKQLINMSKDRLVDLQDKFEKGVQTSNRIKRNLKMSREKIQFLNDEFRT) are a coiled coil.

Belongs to the KXD1 family. In terms of assembly, component of the biogenesis of lysosome-related organelles complex-1 (BLOC-1).

The protein resides in the endosome. In terms of biological role, component of the biogenesis of lysosome-related organelles complex-1 (BLOC-1) involved in endosomal cargo sorting. This chain is Biogenesis of lysosome-related organelles complex 1 subunit KXD1 (KXD1), found in Vanderwaltozyma polyspora (strain ATCC 22028 / DSM 70294 / BCRC 21397 / CBS 2163 / NBRC 10782 / NRRL Y-8283 / UCD 57-17) (Kluyveromyces polysporus).